A 90-amino-acid chain; its full sequence is Probable Fe(2+)-trafficking protein (90 aa).

Belongs to the Fe(2+)-trafficking protein family.

Could be a mediator in iron transactions between iron acquisition and iron-requiring processes, such as synthesis and/or repair of Fe-S clusters in biosynthetic enzymes. This Xylella fastidiosa (strain M23) protein is Probable Fe(2+)-trafficking protein.